A 124-amino-acid chain; its full sequence is Small ribosomal subunit protein bS16 (124 aa).

The tract at residues leucine 82–glutamate 124 is disordered. Residues lysine 99–aspartate 113 show a composition bias toward basic and acidic residues. Residues alanine 114–glutamate 124 show a composition bias toward low complexity.

Belongs to the bacterial ribosomal protein bS16 family.

The sequence is that of Small ribosomal subunit protein bS16 from Sinorhizobium fredii (strain NBRC 101917 / NGR234).